A 246-amino-acid chain; its full sequence is DNA repair protein RecO (246 aa).

The protein belongs to the RecO family.

In terms of biological role, involved in DNA repair and RecF pathway recombination. This Methylorubrum extorquens (strain CM4 / NCIMB 13688) (Methylobacterium extorquens) protein is DNA repair protein RecO.